A 141-amino-acid chain; its full sequence is High mobility group B protein 3 (141 aa).

2 stretches are compositionally biased toward basic and acidic residues: residues methionine 1–serine 12 and glycine 70–glycine 110. Disordered stretches follow at residues methionine 1–serine 40 and lysine 54–aspartate 141. A DNA-binding region (HMG box) is located at residues proline 35–asparagine 104. Serine 122 bears the Phosphoserine mark. A compositionally biased stretch (acidic residues) spans valine 124–aspartate 141.

It belongs to the HMGB family. In terms of tissue distribution, expressed in lateral roots, root tips, stems, cotyledons, leaves and flowers (excluding ovary and pedicels).

Its subcellular location is the nucleus. The protein localises to the cytoplasm. The protein resides in the cytosol. Its function is as follows. Binds preferentially double-stranded DNA. The sequence is that of High mobility group B protein 3 (HMGB3) from Arabidopsis thaliana (Mouse-ear cress).